A 527-amino-acid chain; its full sequence is Amine oxidase [flavin-containing] A (527 aa).

Methionine 1 bears the N-acetylmethionine mark. Residues 1–497 (MENQEKASIA…HTFWERNLPS (497 aa)) are Cytoplasmic-facing. Residue serine 383 is modified to Phosphoserine. Cysteine 406 carries the S-8alpha-FAD cysteine modification. Residues 498-518 (VSGLLKIIGFSTSVTALGFVL) form a helical; Anchor for type IV membrane protein membrane-spanning segment. The Mitochondrial intermembrane segment spans residues 519–527 (YKYKLLPRS). Residues 520–522 (KYK) are interaction with membrane phospholipid headgroups.

This sequence belongs to the flavin monoamine oxidase family. Monomer, homo- or heterodimer (containing two subunits of similar size). Each subunit contains a covalently bound flavin. Enzymatically active as monomer. Requires FAD as cofactor.

It is found in the mitochondrion outer membrane. The enzyme catalyses a secondary aliphatic amine + O2 + H2O = a primary amine + an aldehyde + H2O2. It catalyses the reaction a primary methyl amine + O2 + H2O = an aldehyde + H2O2 + NH4(+). The catalysed reaction is (R)-adrenaline + O2 + H2O = (R)-3,4-dihydroxymandelaldehyde + methylamine + H2O2. It carries out the reaction dopamine + O2 + H2O = 3,4-dihydroxyphenylacetaldehyde + H2O2 + NH4(+). The enzyme catalyses tyramine + O2 + H2O = (4-hydroxyphenyl)acetaldehyde + H2O2 + NH4(+). It catalyses the reaction (R)-noradrenaline + O2 + H2O = (R)-3,4-dihydroxymandelaldehyde + H2O2 + NH4(+). The catalysed reaction is serotonin + O2 + H2O = (5-hydroxyindol-3-yl)acetaldehyde + H2O2 + NH4(+). It carries out the reaction kynuramine + O2 + H2O = 3-(2-aminophenyl)-3-oxopropanal + H2O2 + NH4(+). The enzyme catalyses tryptamine + O2 + H2O = indole-3-acetaldehyde + H2O2 + NH4(+). It catalyses the reaction 2-phenylethylamine + O2 + H2O = 2-phenylacetaldehyde + H2O2 + NH4(+). Its function is as follows. Catalyzes the oxidative deamination of primary and some secondary amine such as neurotransmitters, with concomitant reduction of oxygen to hydrogen peroxide and has important functions in the metabolism of neuroactive and vasoactive amines in the central nervous system and peripheral tissues. Preferentially oxidizes serotonin. Also catalyzes the oxidative deamination of kynuramine to 3-(2-aminophenyl)-3-oxopropanal that can spontaneously condense to 4-hydroxyquinoline. The protein is Amine oxidase [flavin-containing] A of Pongo abelii (Sumatran orangutan).